A 324-amino-acid chain; its full sequence is Membrane protein UL8 (324 aa).

Residues isoleucine 36–lysine 138 are immunoglobulin V-like domain. A helical membrane pass occupies residues threonine 278 to leucine 298.

Belongs to the RL11 family. Post-translationally, highly glycosylated.

It localises to the host cell membrane. Functionally, plays a role in the inhibition of pro-inflammatory cytokine production. This effect is mediated by the conserved Ig-like domain. The polypeptide is Membrane protein UL8 (UL8) (Homo sapiens (Human)).